Here is a 127-residue protein sequence, read N- to C-terminus: MKKSGLLNPQLCAAVARLGHTQTFVVADAGLPIPHEVPVIDLAVVLGTPRFQEVFDAILDEVVVDGATIAHEALGHEPESWVRERIEEVHTVSHEDLKKALPNVSFVVRTGETTPYSNVIVRCGVPF.

H20 functions as the Proton donor in the catalytic mechanism. Residues D28, H94, and Y116 to N118 contribute to the substrate site.

This sequence belongs to the RbsD / FucU family. RbsD subfamily. As to quaternary structure, homodecamer.

The protein localises to the cytoplasm. It catalyses the reaction beta-D-ribopyranose = beta-D-ribofuranose. It functions in the pathway carbohydrate metabolism; D-ribose degradation; D-ribose 5-phosphate from beta-D-ribopyranose: step 1/2. Its function is as follows. Catalyzes the interconversion of beta-pyran and beta-furan forms of D-ribose. The protein is D-ribose pyranase of Cutibacterium acnes (strain DSM 16379 / KPA171202) (Propionibacterium acnes).